An 82-amino-acid chain; its full sequence is Opistoporin-1 (82 aa).

The N-terminal stretch at Met1–Gly22 is a signal peptide. Positions Glu67 to Glu82 are excised as a propeptide.

As to expression, expressed by the venom gland.

The protein resides in the secreted. It localises to the target cell membrane. At high concentrations, acts as a pore former in cellular membranes and causes the leakage of the cells. At submicromolar concentrations, degranulates granulocytes and has a weak hemolytic activity against human erythrocytes. Also strongly inhibits the production of superoxide anions. Has a strong antibacterial activity against Gram-negative bacteria but is less active against Gram-positive bacteria. Also has antifungal activity. This chain is Opistoporin-1, found in Opistophthalmus carinatus (African yellow leg scorpion).